Consider the following 427-residue polypeptide: Glutamate-1-semialdehyde 2,1-aminomutase (427 aa).

K265 is subject to N6-(pyridoxal phosphate)lysine.

It belongs to the class-III pyridoxal-phosphate-dependent aminotransferase family. HemL subfamily. Homodimer. It depends on pyridoxal 5'-phosphate as a cofactor.

It is found in the cytoplasm. It carries out the reaction (S)-4-amino-5-oxopentanoate = 5-aminolevulinate. The protein operates within porphyrin-containing compound metabolism; protoporphyrin-IX biosynthesis; 5-aminolevulinate from L-glutamyl-tRNA(Glu): step 2/2. In Neisseria meningitidis serogroup C / serotype 2a (strain ATCC 700532 / DSM 15464 / FAM18), this protein is Glutamate-1-semialdehyde 2,1-aminomutase.